Here is a 593-residue protein sequence, read N- to C-terminus: Copine-5 (593 aa).

Residues 2-134 form the C2 1 domain; the sequence is EQPEDMASLS…SSGSRLEKPL (133 aa). S19 bears the Phosphoserine mark. Ca(2+) contacts are provided by D38, D44, D98, D100, S103, K108, and D110. The residue at position 103 (S103) is a Phosphoserine. At S140 the chain carries Phosphoserine. One can recognise a C2 2 domain in the interval 161-284; the sequence is KCGTIILSAE…ARGQSQFNIY (124 aa). Ca(2+) is bound by residues D192, D198, D254, D256, and D262. The 227-residue stretch at 328–554 folds into the VWFA domain; that stretch reads NFTVAIDFTA…DVLAEIPDQL (227 aa). Residues 562 to 593 are disordered; that stretch reads GIRPRPPPAAPAQSPPQSPAHSPPGSPVHTHI. Pro residues predominate over residues 565-587; sequence PRPPPAAPAQSPPQSPAHSPPGS.

Belongs to the copine family. Requires Ca(2+) as cofactor. As to expression, expressed in the cerebra and cerebellum of newborn brain. Expressed in the eye, lung and muscles but weakly expressed in the adult brain (at protein level).

Its subcellular location is the perikaryon. It localises to the cell projection. Functionally, probable calcium-dependent phospholipid-binding protein that may play a role in calcium-mediated intracellular processes. Plays a role in dendrite formation by melanocytes. The chain is Copine-5 from Mus musculus (Mouse).